The sequence spans 372 residues: Biotin synthase (372 aa).

A Radical SAM core domain is found at 73 to 308; the sequence is CCGNTVDLCS…QQIIRYAGGR (236 aa). Residues C91, C95, and C98 each coordinate [4Fe-4S] cluster. Residues C136, C173, C233, and R303 each contribute to the [2Fe-2S] cluster site.

Belongs to the radical SAM superfamily. Biotin synthase family. In terms of assembly, homodimer. [4Fe-4S] cluster serves as cofactor. The cofactor is [2Fe-2S] cluster.

The catalysed reaction is (4R,5S)-dethiobiotin + (sulfur carrier)-SH + 2 reduced [2Fe-2S]-[ferredoxin] + 2 S-adenosyl-L-methionine = (sulfur carrier)-H + biotin + 2 5'-deoxyadenosine + 2 L-methionine + 2 oxidized [2Fe-2S]-[ferredoxin]. The protein operates within cofactor biosynthesis; biotin biosynthesis; biotin from 7,8-diaminononanoate: step 2/2. In terms of biological role, catalyzes the conversion of dethiobiotin (DTB) to biotin by the insertion of a sulfur atom into dethiobiotin via a radical-based mechanism. This Cyanothece sp. (strain PCC 7425 / ATCC 29141) protein is Biotin synthase.